The following is a 149-amino-acid chain: Probable flagellum biosynthesis repressor protein FlbT (149 aa).

It belongs to the FlbT family.

Has a post-transcriptional repressor function in flagellum biogenesis. Associates with the 5'-UTR of fljK mRNA and promotes its degradation. The chain is Probable flagellum biosynthesis repressor protein FlbT from Rhizobium leguminosarum bv. trifolii (strain WSM2304).